Consider the following 96-residue polypeptide: Putative pterin-4-alpha-carbinolamine dehydratase (96 aa).

Belongs to the pterin-4-alpha-carbinolamine dehydratase family.

The enzyme catalyses (4aS,6R)-4a-hydroxy-L-erythro-5,6,7,8-tetrahydrobiopterin = (6R)-L-erythro-6,7-dihydrobiopterin + H2O. This chain is Putative pterin-4-alpha-carbinolamine dehydratase, found in Synechocystis sp. (strain ATCC 27184 / PCC 6803 / Kazusa).